The chain runs to 305 residues: uncharacterized protein (305 aa).

10 helical membrane-spanning segments follow: residues 11-31, 37-57, 70-90, 97-117, 126-146, 148-168, 180-200, 217-237, 244-264, and 265-285; these read LLLAFLVIMWGVNWPLSKAAL, LLFAGIRTLIGGLLLVIVALP, IYLVSALLNITLFYGLQTIGL, LFSAIVFFQPVLMGVFSWLWL, VIGLILGFAGVAVISAAGFGG, ISVIGVLLALGSAVSWALGTV, IWMVALQLTIGSVFLLISGFW, LLFISVFVIALGWLVFFTLVG, VASYTFLIPLISIVASSIFLH, and EPLTLSLLAGLLLIVTSICLV. EamA domains lie at 18–141 and 161–287; these read IMWG…VISA and VSWA…LVNT.

Belongs to the EamA transporter family.

The protein resides in the cell membrane. This is an uncharacterized protein from Bacillus subtilis (strain 168).